The sequence spans 397 residues: Glycine betaine/carnitine transport ATP-binding protein GbuA (397 aa).

Positions 28–264 (KSKTDILKET…PANEYVEKFI (237 aa)) constitute an ABC transporter domain. Position 60–67 (60–67 (GLSGSGKS)) interacts with ATP. 2 consecutive CBS domains span residues 279–335 (MIRP…NITS) and 340–395 (LHRD…EVNV).

The protein belongs to the ABC transporter superfamily. As to quaternary structure, the complex is composed of two ATP-binding proteins (GbuA), two transmembrane proteins (GbuB) and a solute-binding protein (GbuC).

The enzyme catalyses a quaternary ammonium(out) + ATP + H2O = a quaternary ammonium(in) + ADP + phosphate + H(+). With respect to regulation, the complex is activated by an osmotic gradient or by low temperature. Its function is as follows. Part of the ABC transporter complex GbuABC involved in glycine betaine uptake. Responsible for energy coupling to the transport system. Involved, with BetL and OpuC, in osmoprotection and cryoprotection of Listeria. Can also uptake carnitine when carnitine is abundant in the growth medium. In Listeria monocytogenes serotype 1/2a (strain 10403S), this protein is Glycine betaine/carnitine transport ATP-binding protein GbuA (gbuA).